The following is a 218-amino-acid chain: Small ribosomal subunit protein uS3c (218 aa).

The 72-residue stretch at 47-118 (VQKNMRTSSG…KLNIAVTRIA (72 aa)) folds into the KH type-2 domain.

This sequence belongs to the universal ribosomal protein uS3 family. As to quaternary structure, part of the 30S ribosomal subunit.

The protein resides in the plastid. It is found in the chloroplast. This chain is Small ribosomal subunit protein uS3c (rps3), found in Nicotiana tomentosiformis (Tobacco).